Reading from the N-terminus, the 568-residue chain is 4-hydroxy-7-methoxy-3-oxo-3,4-dihydro-2H-1,4-benzoxazin-2-yl glucoside beta-D-glucosidase, chloroplastic (568 aa).

The N-terminal 50 residues, 1–50, are a transit peptide targeting the chloroplast; it reads MALLVGGTLNPTTHLSLRSRAGRNSENVWLRSAASSQTSKGRFCNLTVRA. Residues glutamine 92, histidine 194, and 239–240 contribute to the a beta-D-glucoside site; that span reads NE. Glutamate 240 (proton donor) is an active-site residue. The cysteines at positions 259 and 265 are disulfide-linked. Residues tyrosine 383, glutamate 456, tryptophan 504, 511–512, and phenylalanine 520 each bind a beta-D-glucoside; that span reads EW. The active-site Nucleophile is the glutamate 456.

The protein belongs to the glycosyl hydrolase 1 family. In terms of assembly, homohexamer. In terms of tissue distribution, expressed in seedlings, mesocotyl, coleoptile, leaf sheath, and roots.

The protein localises to the plastid. It localises to the chloroplast. The catalysed reaction is DIMBOA beta-D-glucoside + H2O = DIMBOA + D-glucose. It catalyses the reaction DIBOA beta-D-glucoside + H2O = DIBOA + D-glucose. The enzyme catalyses Hydrolysis of terminal, non-reducing beta-D-glucosyl residues with release of beta-D-glucose.. Its activity is regulated as follows. Inhibited by castanospermine, Ag(+) and Cu(2+). 34% inhibition by Zn(2+) and not affected by EDTA. Involved in defense of young plant parts against pests via the production of benzoxazolinones (hydroxamic acids) from hydroxamic acid glucosides. The preferred substrate is DIBOA-beta-D-glucoside. Can also use esculin and genistein glucoside as substrates, but no activity with salicin, p-nitrophenyl-alpha-glucoside or substrates related to cell wall components. This chain is 4-hydroxy-7-methoxy-3-oxo-3,4-dihydro-2H-1,4-benzoxazin-2-yl glucoside beta-D-glucosidase, chloroplastic, found in Secale cereale (Rye).